Consider the following 469-residue polypeptide: Pup--protein ligase (469 aa).

Glu9 is a Mg(2+) binding site. Arg53 serves as a coordination point for ATP. Tyr55 is a Mg(2+) binding site. Asp57 functions as the Proton acceptor in the catalytic mechanism. Glu63 contributes to the Mg(2+) binding site. Residues Thr66 and Trp430 each coordinate ATP.

It belongs to the Pup ligase/Pup deamidase family. Pup-conjugating enzyme subfamily.

The enzyme catalyses ATP + [prokaryotic ubiquitin-like protein]-L-glutamate + [protein]-L-lysine = ADP + phosphate + N(6)-([prokaryotic ubiquitin-like protein]-gamma-L-glutamyl)-[protein]-L-lysine.. The protein operates within protein degradation; proteasomal Pup-dependent pathway. It functions in the pathway protein modification; protein pupylation. In terms of biological role, catalyzes the covalent attachment of the prokaryotic ubiquitin-like protein modifier Pup to the proteasomal substrate proteins, thereby targeting them for proteasomal degradation. This tagging system is termed pupylation. The ligation reaction involves the side-chain carboxylate of the C-terminal glutamate of Pup and the side-chain amino group of a substrate lysine. This is Pup--protein ligase from Kocuria rhizophila (strain ATCC 9341 / DSM 348 / NBRC 103217 / DC2201).